We begin with the raw amino-acid sequence, 285 residues long: HTH-type transcriptional regulator MurR (285 aa).

An HTH rpiR-type domain is found at 1-77; that stretch reads MLYLTKIRNA…MALIGEYSAS (77 aa). The H-T-H motif DNA-binding region spans 37 to 56; sequence SRKMAKLLGISQSSIVKFAQ. Residues 128 to 268 form the SIS domain; it reads IIEAISKAPF…FVGLVQLNDV (141 aa).

As to quaternary structure, homotetramer.

It functions in the pathway amino-sugar metabolism; N-acetylmuramate degradation [regulation]. Its function is as follows. Represses the expression of the murPQ operon involved in the uptake and degradation of N-acetylmuramic acid (MurNAc). Binds to two adjacent inverted repeats within the operator region. MurNAc 6-phosphate, the substrate of MurQ, is the specific inducer that weakens binding of MurR to the operator. The sequence is that of HTH-type transcriptional regulator MurR from Escherichia coli O17:K52:H18 (strain UMN026 / ExPEC).